An 888-amino-acid polypeptide reads, in one-letter code: Pyruvate dehydrogenase E1 component (888 aa).

In terms of assembly, homodimer. Part of the PDH complex, consisting of multiple copies of pyruvate dehydrogenase (E1), dihydrolipoamide acetyltransferase (E2) and lipoamide dehydrogenase (E3). The cofactor is thiamine diphosphate.

The enzyme catalyses N(6)-[(R)-lipoyl]-L-lysyl-[protein] + pyruvate + H(+) = N(6)-[(R)-S(8)-acetyldihydrolipoyl]-L-lysyl-[protein] + CO2. In terms of biological role, component of the pyruvate dehydrogenase (PDH) complex, that catalyzes the overall conversion of pyruvate to acetyl-CoA and CO(2). This Buchnera aphidicola subsp. Schizaphis graminum (strain Sg) protein is Pyruvate dehydrogenase E1 component (aceE).